The chain runs to 307 residues: HTH-type transcriptional regulator DmlR (307 aa).

The region spanning 5-62 (PLLNDLRVFMLVARRAGFAAVAEELGVSPAFVSKRIALLEQTLNVVLLHRTTRRVTIT) is the HTH lysR-type domain. The H-T-H motif DNA-binding region spans 22–41 (FAAVAEELGVSPAFVSKRIA).

Belongs to the LysR transcriptional regulatory family.

Functionally, transcriptional regulator required for the aerobic growth on D-malate as the sole carbon source. Induces the expression of dmlA in response to D-malate or L- or meso-tartrate. Negatively regulates its own expression. The polypeptide is HTH-type transcriptional regulator DmlR (dmlR) (Escherichia coli (strain K12)).